A 371-amino-acid chain; its full sequence is Putative glutamate--cysteine ligase 2 (371 aa).

Belongs to the glutamate--cysteine ligase type 2 family. YbdK subfamily.

It carries out the reaction L-cysteine + L-glutamate + ATP = gamma-L-glutamyl-L-cysteine + ADP + phosphate + H(+). In terms of biological role, ATP-dependent carboxylate-amine ligase which exhibits weak glutamate--cysteine ligase activity. In Cupriavidus pinatubonensis (strain JMP 134 / LMG 1197) (Cupriavidus necator (strain JMP 134)), this protein is Putative glutamate--cysteine ligase 2.